The primary structure comprises 272 residues: Tumor necrosis factor receptor superfamily member 4 (272 aa).

The first 19 residues, 1 to 19, serve as a signal peptide directing secretion; it reads MYVWVQQPTALLLLALTLG. Over 20–211 the chain is Extracellular; the sequence is VTARRLNCVK…PPTLVTPEGP (192 aa). TNFR-Cys repeat units follow at residues 26–61 and 62–103; these read NCVKHTYPSGHKCCRECQPGHGMVSRCDHTRDTLCH and PCET…DTVC. 8 disulfides stabilise this stretch: C27-C38, C39-C52, C42-C60, C63-C77, C80-C95, C83-C103, C105-C123, and C126-C139. The stretch at 104–124 is one TNFR-Cys 3; truncated repeat; sequence RCRPGTQPRQDSGYKLGVDCV. A TNFR-Cys 4 repeat occupies 125–165; that stretch reads PCPPGHFSPGNNQACKPWTNCTLSGKQTRHPASDSLDAVCE. N144 carries N-linked (GlcNAc...) asparagine glycosylation. C145 and C164 are joined by a disulfide. Residues 212–236 traverse the membrane as a helical segment; the sequence is AFAVLLGLGLGLLAPLTVLLALYLL. Over 237–272 the chain is Cytoplasmic; it reads RKAWRLPNTPKPCWGNSFRTPIQEEHTDAHFTLAKI.

Interacts with TRAF2, TRAF3 and TRAF5. In terms of tissue distribution, expressed in CD4(+) T-cells and in T-helper Th17 cells (at protein level).

The protein localises to the membrane. Its function is as follows. Receptor for TNFSF4/OX40L/GP34. Is a costimulatory molecule implicated in long-term T-cell immunity. This chain is Tumor necrosis factor receptor superfamily member 4 (Tnfrsf4), found in Mus musculus (Mouse).